The primary structure comprises 132 residues: Small ribosomal subunit protein uS8 (132 aa).

The protein belongs to the universal ribosomal protein uS8 family. Part of the 30S ribosomal subunit. Contacts proteins S5 and S12.

In terms of biological role, one of the primary rRNA binding proteins, it binds directly to 16S rRNA central domain where it helps coordinate assembly of the platform of the 30S subunit. The sequence is that of Small ribosomal subunit protein uS8 from Desulfitobacterium hafniense (strain DSM 10664 / DCB-2).